Reading from the N-terminus, the 113-residue chain is T cell receptor alpha variable 8-3 (113 aa).

Positions 1–20 are cleaved as a signal peptide; sequence MLLELIPLLGIHFVLRTARA. Positions 21–113 constitute an Ig-like domain; the sequence is QSVTQPDIHI…DAAEYFCAVG (93 aa). Residues Cys-42 and Cys-110 are joined by a disulfide bond. Residue Asn-43 is glycosylated (N-linked (GlcNAc...) asparagine).

Alpha-beta TR is a heterodimer composed of an alpha and beta chain; disulfide-linked. The alpha-beta TR is associated with the transmembrane signaling CD3 coreceptor proteins to form the TR-CD3 (TcR or TCR). The assembly of alpha-beta TR heterodimers with CD3 occurs in the endoplasmic reticulum where a single alpha-beta TR heterodimer associates with one CD3D-CD3E heterodimer, one CD3G-CD3E heterodimer and one CD247 homodimer forming a stable octameric structure. CD3D-CD3E and CD3G-CD3E heterodimers preferentially associate with TR alpha and TR beta chains, respectively. The association of the CD247 homodimer is the last step of TcR assembly in the endoplasmic reticulum and is required for transport to the cell surface.

The protein localises to the cell membrane. Its function is as follows. V region of the variable domain of T cell receptor (TR) alpha chain that participates in the antigen recognition. Alpha-beta T cell receptors are antigen specific receptors which are essential to the immune response and are present on the cell surface of T lymphocytes. Recognize peptide-major histocompatibility (MH) (pMH) complexes that are displayed by antigen presenting cells (APC), a prerequisite for efficient T cell adaptive immunity against pathogens. Binding of alpha-beta TR to pMH complex initiates TR-CD3 clustering on the cell surface and intracellular activation of LCK that phosphorylates the ITAM motifs of CD3G, CD3D, CD3E and CD247 enabling the recruitment of ZAP70. In turn ZAP70 phosphorylates LAT, which recruits numerous signaling molecules to form the LAT signalosome. The LAT signalosome propagates signal branching to three major signaling pathways, the calcium, the mitogen-activated protein kinase (MAPK) kinase and the nuclear factor NF-kappa-B (NF-kB) pathways, leading to the mobilization of transcription factors that are critical for gene expression and essential for T cell growth and differentiation. The T cell repertoire is generated in the thymus, by V-(D)-J rearrangement. This repertoire is then shaped by intrathymic selection events to generate a peripheral T cell pool of self-MH restricted, non-autoaggressive T cells. Post-thymic interaction of alpha-beta TR with the pMH complexes shapes TR structural and functional avidity. The polypeptide is T cell receptor alpha variable 8-3 (Homo sapiens (Human)).